The primary structure comprises 155 residues: Protein-export protein SecB (155 aa).

It belongs to the SecB family. In terms of assembly, homotetramer, a dimer of dimers. One homotetramer interacts with 1 SecA dimer.

The protein localises to the cytoplasm. In terms of biological role, one of the proteins required for the normal export of preproteins out of the cell cytoplasm. It is a molecular chaperone that binds to a subset of precursor proteins, maintaining them in a translocation-competent state. It also specifically binds to its receptor SecA. The sequence is that of Protein-export protein SecB from Shigella sonnei (strain Ss046).